The sequence spans 209 residues: ATP synthase subunit b', chloroplastic (209 aa).

A chloroplast-targeting transit peptide spans 1–62 (MASLLARPQQ…NALMAMPAAA (62 aa)). Residues 67–87 (IFDFNLTLPVMAGEFLLLMVF) form a helical membrane-spanning segment.

This sequence belongs to the ATPase B chain family. In terms of assembly, F-type ATPases have 2 components, F(1) - the catalytic core - and F(0) - the membrane proton channel. F(1) has five subunits: alpha(3), beta(3), gamma(1), delta(1), epsilon(1). F(0) has four main subunits: a(1), b(1), b'(1) and c(10-14). The alpha and beta chains form an alternating ring which encloses part of the gamma chain. F(1) is attached to F(0) by a central stalk formed by the gamma and epsilon chains, while a peripheral stalk is formed by the delta, b and b' chains.

The protein resides in the plastid. It is found in the chloroplast thylakoid membrane. F(1)F(0) ATP synthase produces ATP from ADP in the presence of a proton or sodium gradient. F-type ATPases consist of two structural domains, F(1) containing the extramembraneous catalytic core and F(0) containing the membrane proton channel, linked together by a central stalk and a peripheral stalk. During catalysis, ATP synthesis in the catalytic domain of F(1) is coupled via a rotary mechanism of the central stalk subunits to proton translocation. Its function is as follows. Component of the F(0) channel, it forms part of the peripheral stalk, linking F(1) to F(0). The b'-subunit is a diverged and duplicated form of b found in plants and photosynthetic bacteria. This Chlamydomonas reinhardtii (Chlamydomonas smithii) protein is ATP synthase subunit b', chloroplastic.